Here is a 116-residue protein sequence, read N- to C-terminus: Large ribosomal subunit protein bL17 (116 aa).

This sequence belongs to the bacterial ribosomal protein bL17 family. In terms of assembly, part of the 50S ribosomal subunit. Contacts protein L32.

The chain is Large ribosomal subunit protein bL17 from Trichodesmium erythraeum (strain IMS101).